A 660-amino-acid chain; its full sequence is DNA ligase (660 aa).

NAD(+) is bound by residues 33–37 (DFVYD), 82–83 (SL), and E110. The active-site N6-AMP-lysine intermediate is the K112. NAD(+) contacts are provided by R133, E167, K281, and K305. The Zn(2+) site is built by C396, C399, C412, and C417. The 78-residue stretch at 583-660 (DENRLLAGKK…SFEDIKSYLN (78 aa)) folds into the BRCT domain.

It belongs to the NAD-dependent DNA ligase family. LigA subfamily. Mg(2+) serves as cofactor. Requires Mn(2+) as cofactor.

The enzyme catalyses NAD(+) + (deoxyribonucleotide)n-3'-hydroxyl + 5'-phospho-(deoxyribonucleotide)m = (deoxyribonucleotide)n+m + AMP + beta-nicotinamide D-nucleotide.. Functionally, DNA ligase that catalyzes the formation of phosphodiester linkages between 5'-phosphoryl and 3'-hydroxyl groups in double-stranded DNA using NAD as a coenzyme and as the energy source for the reaction. It is essential for DNA replication and repair of damaged DNA. The polypeptide is DNA ligase (Borrelia garinii subsp. bavariensis (strain ATCC BAA-2496 / DSM 23469 / PBi) (Borreliella bavariensis)).